A 441-amino-acid chain; its full sequence is Apolipoprotein N-acyltransferase (441 aa).

The next 7 helical transmembrane spans lie at 23–43 (IIFK…SIYL), 45–65 (FFEN…GLVL), 75–95 (YFWI…LSSI), 97–117 (FNLN…YGLL), 133–153 (GIFC…WGIF), 156–176 (YGFF…AYFI), and 178–198 (EGYI…FSGF). One can recognise a CN hydrolase domain in the interval 215–441 (INTNISQDQK…LSKEIFNDKK (227 aa)). E256 serves as the catalytic Proton acceptor. K310 is an active-site residue. C359 acts as the Nucleophile in catalysis.

This sequence belongs to the CN hydrolase family. Apolipoprotein N-acyltransferase subfamily.

The protein localises to the cell inner membrane. It carries out the reaction N-terminal S-1,2-diacyl-sn-glyceryl-L-cysteinyl-[lipoprotein] + a glycerophospholipid = N-acyl-S-1,2-diacyl-sn-glyceryl-L-cysteinyl-[lipoprotein] + a 2-acyl-sn-glycero-3-phospholipid + H(+). Its pathway is protein modification; lipoprotein biosynthesis (N-acyl transfer). Catalyzes the phospholipid dependent N-acylation of the N-terminal cysteine of apolipoprotein, the last step in lipoprotein maturation. The sequence is that of Apolipoprotein N-acyltransferase from Campylobacter jejuni subsp. jejuni serotype O:2 (strain ATCC 700819 / NCTC 11168).